The primary structure comprises 289 residues: Delta-sarcoglycan (289 aa).

Residues 1 to 37 (MPQEQYSHHRSTMPSSEGPHIYKVGIYGWRKRCLYFF) are Cytoplasmic-facing. Residues 38 to 56 (VLLLMILILVNLAMTIWIL) form a helical; Signal-anchor for type II membrane protein membrane-spanning segment. The Extracellular portion of the chain corresponds to 57-289 (KVMNFTIDGM…TCQINTSVCL (233 aa)). Asn-60 and Asn-108 each carry an N-linked (GlcNAc...) asparagine glycan. Cystine bridges form between Cys-263-Cys-288 and Cys-265-Cys-281. The N-linked (GlcNAc...) asparagine glycan is linked to Asn-284.

Belongs to the sarcoglycan beta/delta/gamma/zeta family. As to quaternary structure, interacts with FLNC. Cross-link to form 2 major subcomplexes: one consisting of SGCB, SGCD and SGCG and the other consisting of SGCB and SGCD. The association between SGCB and SGCG is particularly strong while SGCA is loosely associated with the other sarcoglycans. Interacts with DAG1. In terms of processing, disulfide bonds are present. As to expression, most strongly expressed in skeletal and heart muscle. Also detected in proliferating myoblasts.

The protein localises to the cell membrane. Its subcellular location is the sarcolemma. The protein resides in the cytoplasm. It is found in the cytoskeleton. Its function is as follows. Component of the sarcoglycan complex, a subcomplex of the dystrophin-glycoprotein complex which forms a link between the F-actin cytoskeleton and the extracellular matrix. This Mus musculus (Mouse) protein is Delta-sarcoglycan (Sgcd).